Reading from the N-terminus, the 193-residue chain is uncharacterized protein (193 aa).

This is an uncharacterized protein from Mycoplasma genitalium (strain ATCC 33530 / DSM 19775 / NCTC 10195 / G37) (Mycoplasmoides genitalium).